Here is a 250-residue protein sequence, read N- to C-terminus: 3-deoxy-manno-octulosonate cytidylyltransferase (250 aa).

Belongs to the KdsB family.

Its subcellular location is the cytoplasm. It carries out the reaction 3-deoxy-alpha-D-manno-oct-2-ulosonate + CTP = CMP-3-deoxy-beta-D-manno-octulosonate + diphosphate. Its pathway is nucleotide-sugar biosynthesis; CMP-3-deoxy-D-manno-octulosonate biosynthesis; CMP-3-deoxy-D-manno-octulosonate from 3-deoxy-D-manno-octulosonate and CTP: step 1/1. The protein operates within bacterial outer membrane biogenesis; lipopolysaccharide biosynthesis. Activates KDO (a required 8-carbon sugar) for incorporation into bacterial lipopolysaccharide in Gram-negative bacteria. The polypeptide is 3-deoxy-manno-octulosonate cytidylyltransferase (Yersinia enterocolitica serotype O:8 / biotype 1B (strain NCTC 13174 / 8081)).